The primary structure comprises 89 residues: MANIKSAKKRAKQTIVRNERNTGQRSMLRTAVKKVIKALDANDAAGAEAAFAVAQPILDRFSARGLIHKNKAARHKSRLTARIKAIKAA.

The span at 1-12 (MANIKSAKKRAK) shows a compositional bias: basic residues. The tract at residues 1–22 (MANIKSAKKRAKQTIVRNERNT) is disordered.

This sequence belongs to the bacterial ribosomal protein bS20 family.

Functionally, binds directly to 16S ribosomal RNA. The sequence is that of Small ribosomal subunit protein bS20 from Xanthomonas oryzae pv. oryzae (strain KACC10331 / KXO85).